We begin with the raw amino-acid sequence, 319 residues long: Acetyl-coenzyme A carboxylase carboxyl transferase subunit alpha (319 aa).

One can recognise a CoA carboxyltransferase C-terminal domain in the interval 35–296 (NLDEEVQRLR…KAQLLADLLD (262 aa)).

It belongs to the AccA family. As to quaternary structure, acetyl-CoA carboxylase is a heterohexamer composed of biotin carboxyl carrier protein (AccB), biotin carboxylase (AccC) and two subunits each of ACCase subunit alpha (AccA) and ACCase subunit beta (AccD).

It localises to the cytoplasm. The enzyme catalyses N(6)-carboxybiotinyl-L-lysyl-[protein] + acetyl-CoA = N(6)-biotinyl-L-lysyl-[protein] + malonyl-CoA. The protein operates within lipid metabolism; malonyl-CoA biosynthesis; malonyl-CoA from acetyl-CoA: step 1/1. Component of the acetyl coenzyme A carboxylase (ACC) complex. First, biotin carboxylase catalyzes the carboxylation of biotin on its carrier protein (BCCP) and then the CO(2) group is transferred by the carboxyltransferase to acetyl-CoA to form malonyl-CoA. In Pectobacterium atrosepticum (strain SCRI 1043 / ATCC BAA-672) (Erwinia carotovora subsp. atroseptica), this protein is Acetyl-coenzyme A carboxylase carboxyl transferase subunit alpha.